The primary structure comprises 330 residues: Phosphate acyltransferase (330 aa).

It belongs to the PlsX family. In terms of assembly, homodimer. Probably interacts with PlsY.

Its subcellular location is the cytoplasm. The enzyme catalyses a fatty acyl-[ACP] + phosphate = an acyl phosphate + holo-[ACP]. The protein operates within lipid metabolism; phospholipid metabolism. In terms of biological role, catalyzes the reversible formation of acyl-phosphate (acyl-PO(4)) from acyl-[acyl-carrier-protein] (acyl-ACP). This enzyme utilizes acyl-ACP as fatty acyl donor, but not acyl-CoA. This is Phosphate acyltransferase from Bacillus cereus (strain B4264).